Here is a 557-residue protein sequence, read N- to C-terminus: Dihydroxy-acid dehydratase (557 aa).

Residue Asp-78 coordinates Mg(2+). Cys-119 provides a ligand contact to [2Fe-2S] cluster. 2 residues coordinate Mg(2+): Asp-120 and Lys-121. Lys-121 is modified (N6-carboxylysine). Residue Cys-192 participates in [2Fe-2S] cluster binding. Position 442 (Glu-442) interacts with Mg(2+). The active-site Proton acceptor is Ser-468.

Belongs to the IlvD/Edd family. Homodimer. The cofactor is [2Fe-2S] cluster. Mg(2+) is required as a cofactor.

The enzyme catalyses (2R)-2,3-dihydroxy-3-methylbutanoate = 3-methyl-2-oxobutanoate + H2O. It catalyses the reaction (2R,3R)-2,3-dihydroxy-3-methylpentanoate = (S)-3-methyl-2-oxopentanoate + H2O. The protein operates within amino-acid biosynthesis; L-isoleucine biosynthesis; L-isoleucine from 2-oxobutanoate: step 3/4. Its pathway is amino-acid biosynthesis; L-valine biosynthesis; L-valine from pyruvate: step 3/4. Functionally, functions in the biosynthesis of branched-chain amino acids. Catalyzes the dehydration of (2R,3R)-2,3-dihydroxy-3-methylpentanoate (2,3-dihydroxy-3-methylvalerate) into 2-oxo-3-methylpentanoate (2-oxo-3-methylvalerate) and of (2R)-2,3-dihydroxy-3-methylbutanoate (2,3-dihydroxyisovalerate) into 2-oxo-3-methylbutanoate (2-oxoisovalerate), the penultimate precursor to L-isoleucine and L-valine, respectively. The protein is Dihydroxy-acid dehydratase of Bacillus mycoides (strain KBAB4) (Bacillus weihenstephanensis).